A 420-amino-acid polypeptide reads, in one-letter code: Glutamate dehydrogenase (420 aa).

The active site involves Lys-105. 220 to 226 (GYGNAGY) contributes to the NAD(+) binding site.

The protein belongs to the Glu/Leu/Phe/Val dehydrogenases family. In terms of assembly, homohexamer.

The protein resides in the cytoplasm. It carries out the reaction L-glutamate + NAD(+) + H2O = 2-oxoglutarate + NH4(+) + NADH + H(+). The catalysed reaction is L-glutamate + NADP(+) + H2O = 2-oxoglutarate + NH4(+) + NADPH + H(+). This chain is Glutamate dehydrogenase (gdhA), found in Pyrococcus endeavori.